The chain runs to 354 residues: Uroporphyrinogen decarboxylase (354 aa).

Substrate contacts are provided by residues 27 to 31, D77, Y154, T209, and H327; that span reads RQAGR.

The protein belongs to the uroporphyrinogen decarboxylase family. In terms of assembly, homodimer.

Its subcellular location is the cytoplasm. It catalyses the reaction uroporphyrinogen III + 4 H(+) = coproporphyrinogen III + 4 CO2. It functions in the pathway porphyrin-containing compound metabolism; protoporphyrin-IX biosynthesis; coproporphyrinogen-III from 5-aminolevulinate: step 4/4. Functionally, catalyzes the decarboxylation of four acetate groups of uroporphyrinogen-III to yield coproporphyrinogen-III. This is Uroporphyrinogen decarboxylase from Escherichia fergusonii (strain ATCC 35469 / DSM 13698 / CCUG 18766 / IAM 14443 / JCM 21226 / LMG 7866 / NBRC 102419 / NCTC 12128 / CDC 0568-73).